The primary structure comprises 342 residues: Farnesyl pyrophosphate synthase 2 (342 aa).

Residues Lys47, Arg50, and Gln86 each contribute to the isopentenyl diphosphate site. Asp93 and Asp97 together coordinate Mg(2+). Arg102 serves as a coordination point for dimethylallyl diphosphate. An isopentenyl diphosphate-binding site is contributed by Arg103. Positions 190, 191, 229, 246, and 255 each coordinate dimethylallyl diphosphate.

Belongs to the FPP/GGPP synthase family. Mg(2+) is required as a cofactor.

It is found in the cytoplasm. It catalyses the reaction isopentenyl diphosphate + dimethylallyl diphosphate = (2E)-geranyl diphosphate + diphosphate. The catalysed reaction is isopentenyl diphosphate + (2E)-geranyl diphosphate = (2E,6E)-farnesyl diphosphate + diphosphate. The protein operates within isoprenoid biosynthesis; farnesyl diphosphate biosynthesis; farnesyl diphosphate from geranyl diphosphate and isopentenyl diphosphate: step 1/1. Its pathway is isoprenoid biosynthesis; geranyl diphosphate biosynthesis; geranyl diphosphate from dimethylallyl diphosphate and isopentenyl diphosphate: step 1/1. In terms of biological role, catalyzes the sequential condensation of isopentenyl pyrophosphate with the allylic pyrophosphates, dimethylallyl pyrophosphate, and then with the resultant geranylpyrophosphate to the ultimate product farnesyl pyrophosphate. The chain is Farnesyl pyrophosphate synthase 2 (FPS2) from Lupinus albus (White lupine).